The sequence spans 325 residues: Forkhead box protein B1 (325 aa).

A DNA-binding region (fork-head) is located at residues 12–103 (QKPPYSYISL…GDMFENGSFL (92 aa)). Over residues 284–309 (LSNSPPSLSPTSSQTATSQSSPATPS) the composition is skewed to low complexity. The interval 284–325 (LSNSPPSLSPTSSQTATSQSSPATPSETLTSPASALHSVAVH) is disordered.

In terms of tissue distribution, expressed widespread in the early developing ventricular zone of the neural tube and later restricted to areas of the spinal cord, hindbrain, thalamus and hypothalamus. Expressed in epithelial cells of developing and adult mammary glands.

It is found in the nucleus. In terms of biological role, transcription factor expressed by neural progenitor cells in specific regions of the embryonic neuroepithelium. Essential for the mammillary nuclei maintenance. Negatively regulates the proliferation of oligodendrocyte progenitors and promotes oligodendrocyte maturation. Also expressed in mammary glands, plays a role in lactation, controls development of mammary glands and the inferior colliculi of the midbrain in the central nervous system that regulates the milk-ejection reflex. The polypeptide is Forkhead box protein B1 (Foxb1) (Mus musculus (Mouse)).